A 185-amino-acid polypeptide reads, in one-letter code: uncharacterized protein (185 aa).

Belongs to the EUO family.

This is an uncharacterized protein from Chlamydia muridarum (strain MoPn / Nigg).